The following is a 438-amino-acid chain: 3-phosphoshikimate 1-carboxyvinyltransferase (438 aa).

3-phosphoshikimate is bound by residues Lys21, Ser22, and Arg26. Lys21 provides a ligand contact to phosphoenolpyruvate. Phosphoenolpyruvate is bound by residues Gly93 and Arg121. Residues Ser166, Ser167, Gln168, Ser194, Asp324, and Lys351 each coordinate 3-phosphoshikimate. Gln168 provides a ligand contact to phosphoenolpyruvate. Catalysis depends on Asp324, which acts as the Proton acceptor. Residues Arg355 and Arg395 each contribute to the phosphoenolpyruvate site.

Belongs to the EPSP synthase family. Monomer.

The protein resides in the cytoplasm. The enzyme catalyses 3-phosphoshikimate + phosphoenolpyruvate = 5-O-(1-carboxyvinyl)-3-phosphoshikimate + phosphate. It functions in the pathway metabolic intermediate biosynthesis; chorismate biosynthesis. Functionally, catalyzes the transfer of the enolpyruvyl moiety of phosphoenolpyruvate (PEP) to the 5-hydroxyl of shikimate-3-phosphate (S3P) to produce enolpyruvyl shikimate-3-phosphate and inorganic phosphate. This is 3-phosphoshikimate 1-carboxyvinyltransferase from Methanobrevibacter smithii (strain ATCC 35061 / DSM 861 / OCM 144 / PS).